The sequence spans 472 residues: Cysteine--tRNA ligase (472 aa).

A Zn(2+)-binding site is contributed by C29. Residues I31–H41 carry the 'HIGH' region motif. 3 residues coordinate Zn(2+): C214, H239, and E243. The 'KMSKS' region motif lies at K271–S275. An ATP-binding site is contributed by K274.

This sequence belongs to the class-I aminoacyl-tRNA synthetase family. As to quaternary structure, monomer. Zn(2+) serves as cofactor.

It is found in the cytoplasm. The catalysed reaction is tRNA(Cys) + L-cysteine + ATP = L-cysteinyl-tRNA(Cys) + AMP + diphosphate. In Picosynechococcus sp. (strain ATCC 27264 / PCC 7002 / PR-6) (Agmenellum quadruplicatum), this protein is Cysteine--tRNA ligase.